The primary structure comprises 348 residues: DnaJ homolog subfamily B member 5 (348 aa).

Positions 4–68 (DYYKILGIPS…KKRSLYDQYG (65 aa)) constitute a J domain.

The chain is DnaJ homolog subfamily B member 5 (Dnajb5) from Mus musculus (Mouse).